A 457-amino-acid chain; its full sequence is Adenylosuccinate synthetase isozyme 2 B (457 aa).

GTP is bound by residues 40 to 46 (GDEGKGK) and 68 to 70 (GHT). The active-site Proton acceptor is the D41. Mg(2+) contacts are provided by D41 and G68. D41 provides a ligand contact to substrate. IMP-binding positions include 41–44 (DEGK), 66–69 (NAGH), T163, R177, N256, T271, and R335. The active-site Proton donor is H69. 331–337 (VTTGRKR) contributes to the substrate binding site. GTP-binding positions include R337, 363–365 (KLD), and 445–448 (GVGK).

The protein belongs to the adenylosuccinate synthetase family. Homodimer. Mg(2+) serves as cofactor.

The protein resides in the cytoplasm. It is found in the mitochondrion. It carries out the reaction IMP + L-aspartate + GTP = N(6)-(1,2-dicarboxyethyl)-AMP + GDP + phosphate + 2 H(+). Its pathway is purine metabolism; AMP biosynthesis via de novo pathway; AMP from IMP: step 1/2. Inhibited competitively by AMP and IMP and non-competitively by fructose 1,6-bisphosphate. In terms of biological role, plays an important role in the de novo pathway and in the salvage pathway of purine nucleotide biosynthesis. Catalyzes the first committed step in the biosynthesis of AMP from IMP. The polypeptide is Adenylosuccinate synthetase isozyme 2 B (adss2-b) (Xenopus tropicalis (Western clawed frog)).